The primary structure comprises 2203 residues: Voltage-dependent L-type calcium channel subunit alpha-1D (2203 aa).

2 disordered regions span residues 1-51 (MMMM…QTVL) and 64-100 (KAAQ…SSNS). Residues 1-126 (MMMMMMMKKM…RACISIVDWK (126 aa)) are Cytoplasmic-facing. Positions 38 to 51 (GPTSQPNSSKQTVL) are enriched in polar residues. Basic residues predominate over residues 82–93 (QRKRQQYAKSKK). The I repeat unit spans residues 112 to 408 (NNPIRRACIS…NLVLGVLSGE (297 aa)). The helical transmembrane segment at 127–145 (PFDIFILLAIFANCVALAI) threads the bilayer. At 146-163 (YIPFPEDDSNSTNHNLEK) the chain is on the extracellular side. Asn155 carries N-linked (GlcNAc...) asparagine glycosylation. The helical transmembrane segment at 164 to 183 (VEYAFLIIFTVETFLKIIAS) threads the bilayer. Over 184–195 (GLLLHPNASVRN) the chain is Cytoplasmic. A helical transmembrane segment spans residues 196–214 (GWNLLDFVIVIVGLFSVIL). At 215–235 (EQLTKETEGGNHSSGKSGGFD) the chain is on the extracellular side. An N-linked (GlcNAc...) asparagine glycan is attached at Asn225. Residues 236-254 (VKALRAFRVLRPLRLVSGV) traverse the membrane as a helical segment. The Cytoplasmic portion of the chain corresponds to 255-273 (PSLQVVLNSIIKAMVPLLH). A helical transmembrane segment spans residues 274–293 (IALLVLFVIIIYAIIGLELF). Over 294–381 (IGKMHKTCFF…WVNDAIGWEW (88 aa)) the chain is Extracellular. A glycan (N-linked (GlcNAc...) asparagine) is linked at Asn329. Glu364 lines the Ca(2+) pocket. A helical transmembrane segment spans residues 382–406 (PWVYFVSLIILGSFFVLNLVLGVLS). At 407–582 (GEFSKEREKA…RRCRAAVKSV (176 aa)) the chain is on the cytoplasmic side. Residues 429–446 (QQLEEDLKGYLDWITQAE) are binding to the beta subunit. The interval 449–480 (DPENEEEGGEEGKRNTSMPTSETESVNTENVS) is disordered. Over residues 463 to 479 (NTSMPTSETESVNTENV) the composition is skewed to polar residues. An II repeat occupies 528-774 (EALCVCRCSL…DWNAVMYDGI (247 aa)). The helical transmembrane segment at 583–602 (TFYWLVIVLVFLNTLTISSE) threads the bilayer. Residues 603 to 617 (HYNQPDWLTQIQDIA) are Extracellular-facing. Residues 618–636 (NKVLLALFTCEMLVKMYSL) form a helical membrane-spanning segment. The Cytoplasmic segment spans residues 637 to 644 (GLQAYFVS). The helical transmembrane segment at 645 to 663 (LFNRFDCFVVCGGITETIL) threads the bilayer. At 664-673 (VELELMSPLG) the chain is on the extracellular side. A helical transmembrane segment spans residues 674–692 (VSVFRCVRLLRIFKVTRHW). Residues 693-711 (TSLSNLVASLLNSMKSIAS) lie on the Cytoplasmic side of the membrane. The helical transmembrane segment at 712 to 732 (LLLLLFLFIIIFSLLGMQLFG) threads the bilayer. At 733–786 (GKFNFDETQTKRSTFDNFPQALLTVFQILTGEDWNAVMYDGIMAYGGPSSSGMI) the chain is on the extracellular side. Glu764 is a Ca(2+) binding site. The chain crosses the membrane as a helical span at residues 787-811 (VCIYFIILFICGNYILLKLFLAIAV). Over 812–945 (DNLADAESLN…VGCHKLINHH (134 aa)) the chain is Cytoplasmic. Residues 822-909 (TAQKEEAEEK…AGPRPRRISE (88 aa)) form a disordered region. The segment covering 824 to 849 (QKEEAEEKERKKIARKESLENKKNNK) has biased composition (basic and acidic residues). Residues 850-861 (PEVNQIANSDNK) show a composition bias toward polar residues. Positions 884-897 (VGEEEEEEEEDEPE) are enriched in acidic residues. The III repeat unit spans residues 892–1174 (EEDEPEVPAG…LLYKAIDSNG (283 aa)). The helical transmembrane segment at 946–964 (IFTNLILVFIMLSSAALAA) threads the bilayer. The Extracellular portion of the chain corresponds to 965–980 (EDPIRSHSFRNTILGY). A helical membrane pass occupies residues 981–1000 (FDYAFTAIFTVEILLKMTTF). Residues 1001-1012 (GAFLHKGAFCRN) lie on the Cytoplasmic side of the membrane. The chain crosses the membrane as a helical span at residues 1013–1031 (YFNLLDMLVVGVSLVSFGI). The Extracellular portion of the chain corresponds to 1032–1037 (QSSAIS). The chain crosses the membrane as a helical span at residues 1038–1057 (VVKILRVLRVLRPLRAINRA). The Cytoplasmic portion of the chain corresponds to 1058–1076 (KGLKHVVQCVFVAIRTIGN). A helical transmembrane segment spans residues 1077 to 1096 (IMIVTTLLQFMFACIGVQLF). The Extracellular portion of the chain corresponds to 1097–1186 (KGKFYRCTDE…VGPVYNYRVE (90 aa)). Residues 1134 to 1224 (RIWQNSDFNF…QEQGEKEYKN (91 aa)) form a dihydropyridine binding region. Glu1160 is a Ca(2+) binding site. Residues 1187 to 1207 (ISIFFIIYIIIVAFFMMNIFV) traverse the membrane as a helical segment. Residues 1208-1264 (GFVIVTFQEQGEKEYKNCELDKNQRQCVEYALKARPLRRYIPKNPYQYKFWYVVNSS) are Cytoplasmic-facing. The IV repeat unit spans residues 1211 to 1486 (IVTFQEQGEK…YTCGSNFAIV (276 aa)). A helical transmembrane segment spans residues 1265 to 1283 (PFEYMMFVLIMLNTLCLAM). The Extracellular portion of the chain corresponds to 1284-1298 (QHYEQSKMFNDAMDI). A helical transmembrane segment spans residues 1299–1318 (LNMVFTGVFTVEMVLKVIAF). Residues 1319–1325 (KPKGYFS) lie on the Cytoplasmic side of the membrane. Residues 1326-1347 (DAWNTFDSLIVIGSIIDVALSE) form a helical membrane-spanning segment. The Extracellular segment spans residues 1348 to 1357 (ADNSEESNRI). A helical membrane pass occupies residues 1358–1377 (SITFFRLFRVMRLVKLLSRG). Over 1378-1396 (EGIRTLLWTFIKSFQALPY) the chain is Cytoplasmic. A helical transmembrane segment spans residues 1397 to 1416 (VALLIAMLFFIYAVIGMQMF). Over 1417–1483 (GKVAMRDNNQ…GEEYTCGSNF (67 aa)) the chain is Extracellular. Positions 1464 to 1530 (LCDPDSDYNP…LGPHHLDEFK (67 aa)) are dihydropyridine binding. The tract at residues 1476–1519 (EYTCGSNFAIVYFISFYMLCAFLIINLFVAVIMDNFDYLTRDWS) is phenylalkylamine binding. Residues 1484–1508 (AIVYFISFYMLCAFLIINLFVAVIM) traverse the membrane as a helical segment. Residues 1509–2203 (DNFDYLTRDW…ADEMICITTL (695 aa)) lie on the Cytoplasmic side of the membrane. 4 disordered regions span residues 1734–1766 (NHVN…PASD), 1795–1816 (TSTN…KRPS), 1920–1963 (FERP…HRRS), and 2176–2195 (GPGY…DLAD). Over residues 1795-1806 (TSTNANLNNANM) the composition is skewed to polar residues. The span at 2180–2195 (SDEEPDPGREEEDLAD) shows a compositional bias: acidic residues.

The protein belongs to the calcium channel alpha-1 subunit (TC 1.A.1.11) family. CACNA1D subfamily. Voltage-dependent calcium channels are multisubunit complexes, consisting of alpha-1, alpha-2, beta and delta subunits in a 1:1:1:1 ratio. The channel activity is directed by the pore-forming and voltage-sensitive alpha-1 subunit. In many cases, this subunit is sufficient to generate voltage-sensitive calcium channel activity. The auxiliary subunits beta and alpha-2/delta linked by a disulfide bridge regulate the channel activity. Interacts with CABP1 and CABP4, resulting in a near elimination of calcium-dependent inactivation of the channel. Interacts with RIMBP2. In terms of tissue distribution, expressed in brain, pancreatic islets and B-lymphocytes.

Its subcellular location is the membrane. It carries out the reaction Ca(2+)(in) = Ca(2+)(out). Functionally, voltage-sensitive calcium channels (VSCC) mediate the entry of calcium ions into excitable cells and are also involved in a variety of calcium-dependent processes, including muscle contraction, hormone or neurotransmitter release, gene expression, cell motility, cell division and cell death. The isoform alpha-1D gives rise to L-type calcium currents. Long-lasting (L-type) calcium channels belong to the 'high-voltage activated' (HVA) group. They are blocked by dihydropyridines (DHP), phenylalkylamines, and by benzothiazepines. In terms of biological role, voltage-sensitive calcium channels (VSCC) mediate the entry of calcium ions into excitable cells and are also involved in a variety of calcium-dependent processes, including muscle contraction, hormone or neurotransmitter release, gene expression, cell motility, cell division and cell death. The isoform alpha-1D gives rise to L-type calcium currents. This is Voltage-dependent L-type calcium channel subunit alpha-1D (Cacna1d) from Rattus norvegicus (Rat).